Reading from the N-terminus, the 150-residue chain is Large ribosomal subunit protein bL9 (150 aa).

Belongs to the bacterial ribosomal protein bL9 family.

Binds to the 23S rRNA. The protein is Large ribosomal subunit protein bL9 of Photorhabdus laumondii subsp. laumondii (strain DSM 15139 / CIP 105565 / TT01) (Photorhabdus luminescens subsp. laumondii).